Here is an 876-residue protein sequence, read N- to C-terminus: MADPTFAATSSSTSFRGLHERLVAMTQELAEERRHKRGINSSAGANKRSSSTPDGSVLKNDVKQQLAKERREQQKRQQEANKEKQLLEKEQKAKLQYEKQLEEKHRKLKEQKEKDQRRQASAEEKRKQKQAEDTEKFKAVVSRTLERCNRIDQRQKRWSWEGGVMNADKSGKLENKRSSSLSRKDNRLHPRGDMQHVDNTPGMTKYVFRYVTAPVFSSDEIKSSAMFCKPSAKTPVAAKLEKITTKKLDASLRGHVEGLSMMNIEIPPKITIEVPSPPKLEESSEADAEVRLQTMDDISKVKEDASQKVDIKVPTDENIARHPKPNVEELSPVSVDTSSSVELSSIVSVNSSPSLSTGSFSFGSVEISPVVSIDASLETNIDTSPELSMDSGNTKVASEIKTEAPLQARGESRLEASVEGQPEANVEGSPKNPEIDKRNINLTTKKQPLCHIPCYRWPSSSALGCRPPSPLKALQTRKIRPPSPIPVSSKLSTKTSLSYKITPVQNVLYVPNSLGVIATKKETIQKYPIKKEFGNRSMPSAEAIKKAFIQIRHAAYEQSKNEKERLQKEETKQRIARKPEIMAEKLDKVPAEGSLPCQDEQQDKNPTKTFLESPEVQKAELQKGDSAMMKSRDSAEQRKKEQENILQHWQERLERRKASEISFSSEDEADDEGESEDSLEIFPSGGKMLSMKLKKFHKYAKTKPQKLVFLQSGTDEVDTNKNVYFNGDMKAVKQKDPKYSMIQGKGSKLSAKKPPTRPIRSRKTKEGSTAIRPTQSASSNPNHKWVCDKVIDFNQTPFLKTTLTKSNKESPADSKIACQGPQAHLDHRKRTKSVSVPLTNVLSHLHITGRASNLEHPFASVYSRLAFGKEAEESDV.

Disordered regions lie at residues 30–139 (AEER…KFKA), 162–200 (GGVMNADKSGKLENKRSSSLSRKDNRLHPRGDMQHVDNT), and 402–438 (TEAPLQARGESRLEASVEGQPEANVEGSPKNPEIDKR). The span at 39 to 54 (INSSAGANKRSSSTPD) shows a compositional bias: polar residues. Residues 58-136 (LKNDVKQQLA…KQKQAEDTEK (79 aa)) adopt a coiled-coil conformation. Composition is skewed to basic and acidic residues over residues 60–139 (NDVK…KFKA) and 169–196 (KSGKLENKRSSSLSRKDNRLHPRGDMQH). 2 positions are modified to phosphoserine: Ser417 and Ser483. 2 coiled-coil regions span residues 549 to 578 (IQIRHAAYEQSKNEKERLQKEETKQRIARK) and 626 to 658 (SAMMKSRDSAEQRKKEQENILQHWQERLERRKA). Disordered stretches follow at residues 558 to 683 (QSKN…EIFP) and 742 to 783 (IQGK…NPNH). Basic and acidic residues-rich tracts occupy residues 559–590 (SKNEKERLQKEETKQRIARKPEIMAEKLDKVP) and 630–659 (KSRDSAEQRKKEQENILQHWQERLERRKAS). Residues 665–679 (SEDEADDEGESEDSL) show a composition bias toward acidic residues. Residues 750–763 (SAKKPPTRPIRSRK) show a composition bias toward basic residues. The span at 771 to 782 (IRPTQSASSNPN) shows a compositional bias: polar residues.

This sequence belongs to the MAP7 family. As to expression, high expression in lung, skeletal muscle, brain, and kidney, with much weaker expression in spleen, small intestine, liver, and heart.

The protein resides in the cytoplasm. It is found in the cytoskeleton. The protein localises to the spindle. Promotes the assembly and stability of microtubules. In Mus musculus (Mouse), this protein is MAP7 domain-containing protein 3 (Map7d3).